The sequence spans 352 residues: Alanine racemase (352 aa).

K34 functions as the Proton acceptor; specific for D-alanine in the catalytic mechanism. The residue at position 34 (K34) is an N6-(pyridoxal phosphate)lysine. Substrate is bound at residue R126. Catalysis depends on Y248, which acts as the Proton acceptor; specific for L-alanine. Residue M296 participates in substrate binding.

Belongs to the alanine racemase family. Requires pyridoxal 5'-phosphate as cofactor.

The enzyme catalyses L-alanine = D-alanine. It participates in amino-acid biosynthesis; D-alanine biosynthesis; D-alanine from L-alanine: step 1/1. Its function is as follows. Catalyzes the interconversion of L-alanine and D-alanine. May also act on other amino acids. In Deinococcus deserti (strain DSM 17065 / CIP 109153 / LMG 22923 / VCD115), this protein is Alanine racemase (alr).